The primary structure comprises 598 residues: MMFCKLLRCQNGIASKRAALSLKGFKTSSINLVEKKLNKYSETITGPKSQGASQAMLYATGLNEEDMKKPQVGIASCWYEGNPCNMHLLDLGRRVKEGVKKAGLTGFQFNTIGVSDGISMGTTGMRYSLQSREIIADSIETVMQGQWYDANVSIPGCDKNMPGCLIAMGRFNRPSIMVYGGSIRAGHSPCQNNAPIDIVSAFQSYGEFITGKIDEPTRHDIIRHACPGGGACGGMYTANTMASCAEAMGMTLPGSSSYLAGSPEKFAECEAAGSAIKRLLVDDIKPRDIMTRSAFENAMVLTMTLGGSTNSVLHLIAIAKSVGITLTLDDFQAVSNRTPFIADMKPSGKYVMEDLFAIGGIPSVLKYLHAEGLIDGSNITVTGKTLAENLRGFKDLAEGQKIIRPLSNPIKTEGHLRVLRGSLAPEGSVAKITGKEGLNFTGKARVFDAENDFIAALERGEFKKGEKTVVIIRFEGPKGGPGMPEMLKPSSAIMGAGLGKDVALLTDGRFSGGSHGFLIGHVDPEAQVGGPIALVQDGDVIEINAVKNTLDLMVDEKEMARRRSVWKAPPLKYQQGTLLKYARNVSTASKGAVTDSLE.

The transit peptide at 1–18 (MMFCKLLRCQNGIASKRA) directs the protein to the mitochondrion. [2Fe-2S] cluster is bound at residue Cys-84. Asp-116 is a Mg(2+) binding site. Position 157 (Cys-157) interacts with [2Fe-2S] cluster. Mg(2+) is bound at residue Asp-158. Position 232 (Cys-232) interacts with [2Fe-2S] cluster. Residue Glu-485 coordinates Mg(2+). Ser-511 acts as the Proton acceptor in catalysis.

The protein belongs to the IlvD/Edd family. Requires [2Fe-2S] cluster as cofactor. Mg(2+) serves as cofactor.

It is found in the mitochondrion. The catalysed reaction is (2R)-2,3-dihydroxy-3-methylbutanoate = 3-methyl-2-oxobutanoate + H2O. It carries out the reaction (2R,3R)-2,3-dihydroxy-3-methylpentanoate = (S)-3-methyl-2-oxopentanoate + H2O. The protein operates within amino-acid biosynthesis; L-isoleucine biosynthesis; L-isoleucine from 2-oxobutanoate: step 3/4. It functions in the pathway amino-acid biosynthesis; L-valine biosynthesis; L-valine from pyruvate: step 3/4. Dihydroxyacid dehydratase that catalyzes the third step in the common pathway leading to biosynthesis of branched-chain amino acids. Catalyzes the dehydration of (2R,3R)-2,3-dihydroxy-3-methylpentanoate (2,3-dihydroxy-3-methylvalerate) into 2-oxo-3-methylpentanoate (2-oxo-3-methylvalerate) and of (2R)-2,3-dihydroxy-3-methylbutanoate (2,3-dihydroxyisovalerate) into 2-oxo-3-methylbutanoate (2-oxoisovalerate), the penultimate precursor to L-isoleucine and L-valine, respectively. This Schizosaccharomyces pombe (strain 972 / ATCC 24843) (Fission yeast) protein is Dihydroxy-acid dehydratase, mitochondrial.